Reading from the N-terminus, the 769-residue chain is 3-O-beta-D-glucopyranosyl-beta-D-glucuronide phosphorylase (769 aa).

Asp457 acts as the Proton donor in catalysis.

It belongs to the glycosyl hydrolase 94 family. In terms of assembly, homodimer.

It localises to the cytoplasm. The enzyme catalyses 3-O-beta-D-glucosyl-D-glucuronate + phosphate = aldehydo-D-glucuronate + alpha-D-glucose 1-phosphate. It carries out the reaction a 3-O-beta-D-glucosyl-beta-D-glucuronoside + phosphate = a beta-D-glucuronoside + alpha-D-glucose 1-phosphate. Glycoside phosphorylase that catalyzes the reversible phosphorolysis of 3-O-beta-D-glucosyl-D-glucuronate into D-glucuronic acid and alpha-D-glucose 1-phosphate. Cannot phosphorolyze cellobionic acid and laminaribiose. In the reverse direction, using alpha-D-glucose 1-phosphate as a donor substrate, the enzyme acts on D-glucuronate and its artificial derivative p-nitrophenyl-beta-D-glucuronide. The apparent catalytic efficiency towards p-nitrophenyl-beta-D-glucuronide is approximately 5-fold higher than that towards D-glucuronic acid. Is probably involved in the metabolism of oligosaccharides containing the 3-O-beta-D-glucopyranosyl-beta-D-glucuronide structure released from bacterial and plant acidic carbohydrates. This chain is 3-O-beta-D-glucopyranosyl-beta-D-glucuronide phosphorylase, found in Paenibacillus borealis.